A 461-amino-acid chain; its full sequence is Alpha-tubulin N-acetyltransferase 1 (461 aa).

An N-acetyltransferase domain is found at 2 to 189 (VEFRFDIKPL…NNFVLYEGFF (188 aa)). Residues 123–136 (FYVHESRQRAGLGK) and 159–168 (SEKLLSFLSK) each bind acetyl-CoA. Disordered stretches follow at residues 196-295 (NGGG…GNHD), 314-362 (NSYE…PEVA), and 418-443 (RPPGHEVTSPGQDNTDAMSTVSSGGG). Over residues 233–254 (RRGSQQQTTPNARLQQITQISP) the composition is skewed to polar residues. Low complexity predominate over residues 283–293 (GSAEANSGNGN). Residues 318 to 336 (PEPEVEPEPEPEPEPEPEP) show a composition bias toward acidic residues. Residues 339–356 (ITPPSPPPKSHTPTPPSV) are compositionally biased toward pro residues. Residues 426 to 439 (SPGQDNTDAMSTVS) show a composition bias toward polar residues.

Belongs to the acetyltransferase ATAT1 family.

The enzyme catalyses L-lysyl-[alpha-tubulin] + acetyl-CoA = N(6)-acetyl-L-lysyl-[alpha-tubulin] + CoA + H(+). In terms of biological role, specifically acetylates 'Lys-40' in alpha-tubulin on the lumenal side of microtubules. Promotes microtubule destabilization and accelerates microtubule dynamics; this activity may be independent of acetylation activity. Acetylates alpha-tubulin with a slow enzymatic rate, due to a catalytic site that is not optimized for acetyl transfer. Enters the microtubule through each end and diffuses quickly throughout the lumen of microtubules. Acetylates only long/old microtubules because of its slow acetylation rate since it does not have time to act on dynamically unstable microtubules before the enzyme is released. Acetylates central spindle microtubules. The sequence is that of Alpha-tubulin N-acetyltransferase 1 from Drosophila melanogaster (Fruit fly).